Reading from the N-terminus, the 278-residue chain is Large ribosomal subunit protein uL2c (278 aa).

The segment at 222-241 (GVVMNPNDHPHGGGEGRSPI) is disordered.

It belongs to the universal ribosomal protein uL2 family. Part of the 50S ribosomal subunit.

Its subcellular location is the plastid. The protein localises to the chloroplast. This is Large ribosomal subunit protein uL2c (rpl2) from Tupiella akineta (Green alga).